The following is an 856-amino-acid chain: DNA mismatch repair protein MutS (856 aa).

611–618 (GPNMGGKS) lines the ATP pocket.

Belongs to the DNA mismatch repair MutS family.

Functionally, this protein is involved in the repair of mismatches in DNA. It is possible that it carries out the mismatch recognition step. This protein has a weak ATPase activity. The polypeptide is DNA mismatch repair protein MutS (Histophilus somni (strain 129Pt) (Haemophilus somnus)).